The chain runs to 608 residues: Endo-1,4-beta-xylanase C (608 aa).

Positions 1–25 (MKTFSVTKSSVVFAMALGMASTAFA) are cleaved as a signal peptide. The GH11 1 domain maps to 40 to 250 (TITSNQTGKI…VNGEVRGGHM (211 aa)). Glu142 acts as the Nucleophile in catalysis. Glu237 functions as the Proton donor in the catalytic mechanism. Residues 263–294 (SDPVSSSSVKSSSSTDAPKSSSSKGNGNVSGK) are compositionally biased toward low complexity. A disordered region spans residues 263-296 (SDPVSSSSVKSSSSTDAPKSSSSKGNGNVSGKID). The 199-residue stretch at 316–514 (NSSVTGNVGS…GSGSFDVTYF (199 aa)) folds into the GH11 2 domain. The Nucleophile role is filled by Glu409. Residue Glu501 is the Proton donor of the active site. Residues 520–539 (AHPLAQPEPESSSSEAKVES) form a disordered region. Residues 527 to 539 (EPESSSSEAKVES) are compositionally biased toward low complexity.

Belongs to the glycosyl hydrolase 11 (cellulase G) family.

The catalysed reaction is Endohydrolysis of (1-&gt;4)-beta-D-xylosidic linkages in xylans.. It participates in glycan degradation; xylan degradation. Cleaves xylans with the production of xylose, xylobiose and xylo-oligosaccharides. This chain is Endo-1,4-beta-xylanase C (xynC), found in Fibrobacter succinogenes (strain ATCC 19169 / S85).